We begin with the raw amino-acid sequence, 424 residues long: UDP-N-acetylglucosamine 1-carboxyvinyltransferase (424 aa).

Position 22 to 23 (22 to 23 (KN)) interacts with phosphoenolpyruvate. Arg-93 serves as a coordination point for UDP-N-acetyl-alpha-D-glucosamine. The Proton donor role is filled by Cys-117. A 2-(S-cysteinyl)pyruvic acid O-phosphothioketal modification is found at Cys-117. UDP-N-acetyl-alpha-D-glucosamine contacts are provided by residues 122-126 (RPVDL), Asp-307, and Ile-329.

The protein belongs to the EPSP synthase family. MurA subfamily.

It localises to the cytoplasm. It carries out the reaction phosphoenolpyruvate + UDP-N-acetyl-alpha-D-glucosamine = UDP-N-acetyl-3-O-(1-carboxyvinyl)-alpha-D-glucosamine + phosphate. Its pathway is cell wall biogenesis; peptidoglycan biosynthesis. Cell wall formation. Adds enolpyruvyl to UDP-N-acetylglucosamine. This Chlorobaculum parvum (strain DSM 263 / NCIMB 8327) (Chlorobium vibrioforme subsp. thiosulfatophilum) protein is UDP-N-acetylglucosamine 1-carboxyvinyltransferase.